A 132-amino-acid polypeptide reads, in one-letter code: Sirohydrochlorin cobaltochelatase (132 aa).

H10 acts as the Proton acceptor in catalysis. Co(2+) is bound at residue H10. Substrate-binding positions include R46 and 69–74; that span reads ISYGLH. H74 is a Co(2+) binding site.

It belongs to the CbiX family. CbiXS subfamily. As to quaternary structure, homotetramer; dimer of dimers.

It catalyses the reaction Co-sirohydrochlorin + 2 H(+) = sirohydrochlorin + Co(2+). Its pathway is cofactor biosynthesis; adenosylcobalamin biosynthesis; cob(II)yrinate a,c-diamide from sirohydrochlorin (anaerobic route): step 1/10. Catalyzes the insertion of Co(2+) into sirohydrochlorin as part of the anaerobic pathway to cobalamin biosynthesis. This chain is Sirohydrochlorin cobaltochelatase, found in Archaeoglobus fulgidus (strain ATCC 49558 / DSM 4304 / JCM 9628 / NBRC 100126 / VC-16).